Here is a 411-residue protein sequence, read N- to C-terminus: DSEFAELKIRGKIFKLPILKASIGEDVIDISRVSAEADCFTYDPGFMSTASCQSTITYIDGDKGILRHRGYDIKDLAEKSDFLEVAYLLIYGELPSGEQYNNFTKQVAHHSLVNERLHYLFQTFCSSSHPMAIMLAAVGSLSAFYPDLLNFKEADYELTAIRMIAKIPTIAAMSYKYSIGQPFIYPDNSLDFTENFLHMMFATPCTKYTVNPIIKNALNKIFILHADHEQNASTSTVRIAGSSGANPFACISTGIASLWGPAHGGANEAVINMLKEIGSSEYIPKYIAKAKDKNDPFRLMGFGHRVYKNYDPRAAVLKETCKEVLKELGQLDNNPLLQIAIELEAIALKDEYFIERKLYPNVDFYSGIIYKAMGIPSQMFTVLFAIARTVGWMAQWKEMHEDPEQKISRPR.

Active-site residues include His-304 and Asp-363.

It belongs to the citrate synthase family.

It carries out the reaction oxaloacetate + acetyl-CoA + H2O = citrate + CoA + H(+). The protein operates within carbohydrate metabolism; tricarboxylic acid cycle; isocitrate from oxaloacetate: step 1/2. The sequence is that of Citrate synthase (gltA) from Rickettsia parkeri.